Consider the following 304-residue polypeptide: Hairy/enhancer-of-split related with YRPW motif protein 1 (304 aa).

Residues 1-52 (MKRAHPEYSSSESELDETIEVEKESADENGNLSSALGSMSPTTSSQILARKR) form a disordered region. Over residues 28–47 (ENGNLSSALGSMSPTTSSQI) the composition is skewed to polar residues. The interval 48-117 (LARKRRRGII…GGKGYFDAHA (70 aa)) is transcriptional repression and interaction with NCOR1 and SIN3A. Positions 49 to 104 (ARKRRRGIIEKRRRDRINNSLSELRRLVPSAFEKQGSAKLEKAEILQMTVDHLKML) constitute a bHLH domain. The 37-residue stretch at 122–158 (YRSLGFRECLAEVARYLSIIEGLDASDPLRVRLVSHL) folds into the Orange domain. Over residues 197–211 (SQSTHGNTGTSASPT) the composition is skewed to polar residues. A disordered region spans residues 197 to 234 (SQSTHGNTGTSASPTESHHQGRLATAHPEASALRAPPS). The YRPW motif motif lies at 294–297 (YRPW).

Belongs to the HEY family. Self-associates. Interacts with HES1 and HEYL. Interacts with HDAC1, NCOR1 and SIN3A. Interacts with GATA4 and GATA6. Interacts with CCDC89/BOIP.

The protein resides in the nucleus. Transcriptional repressor which binds preferentially to the canonical E box sequence 5'-CACGTG-3'. Downstream effector of Notch signaling required for cardiovascular development. Specifically required for the Notch-induced endocardial epithelial to mesenchymal transition, which is itself criticial for cardiac valve and septum development. May be required in conjunction with HEY2 to specify arterial cell fate or identity. Promotes maintenance of neuronal precursor cells and glial versus neuronal fate specification. Represses transcription by the cardiac transcriptional activators GATA4 and GATA6 and by the neuronal bHLH factors ASCL1/MASH1 and NEUROD4/MATH3. The polypeptide is Hairy/enhancer-of-split related with YRPW motif protein 1 (HEY1) (Bos taurus (Bovine)).